The primary structure comprises 579 residues: Glucans biosynthesis protein G (579 aa).

Positions 1–37 are cleaved as a signal peptide; that stretch reads MIVSPHKASRIPGNRLRKALMASAALVGLMSAGQLWA. The disordered stretch occupies residues 516–579; the sequence is AKPAEEAKHD…TWSYQLPADE (64 aa). A compositionally biased stretch (basic and acidic residues) spans 517–539; that stretch reads KPAEEAKHDKTAAKHGKAEKAAK.

Belongs to the OpgD/OpgG family.

The protein localises to the periplasm. It functions in the pathway glycan metabolism; osmoregulated periplasmic glucan (OPG) biosynthesis. Functionally, involved in the biosynthesis of osmoregulated periplasmic glucans (OPGs). The sequence is that of Glucans biosynthesis protein G from Pseudomonas putida (strain W619).